A 264-amino-acid polypeptide reads, in one-letter code: Fibroblast growth factor 5 (264 aa).

Positions 1–20 are cleaved as a signal peptide; sequence MSLSLLFLIFCSHLIHSAWA. The segment at 25-81 is disordered; it reads RLTPEGQPAPPRNPGDSSGSRGRSSATFSSSSASSPVAASPGSQGSGSEHSSFQWSP. The segment covering 38–72 has biased composition (low complexity); sequence PGDSSGSRGRSSATFSSSSASSPVAASPGSQGSGS. Asparagine 108 is a glycosylation site (N-linked (GlcNAc...) asparagine). The tract at residues 227 to 254 is disordered; it reads FTVTVPEKKKPPVKPKVPLSQPRRSPSP.

This sequence belongs to the heparin-binding growth factors family. Interacts with FGFR1 and FGFR2. Affinity between fibroblast growth factors (FGFs) and their receptors is increased by heparan sulfate glycosaminoglycans that function as coreceptors.

It is found in the secreted. In terms of biological role, plays an important role in the regulation of cell proliferation and cell differentiation. Required for normal regulation of the hair growth cycle. Functions as an inhibitor of hair elongation by promoting progression from anagen, the growth phase of the hair follicle, into catagen the apoptosis-induced regression phase. This is Fibroblast growth factor 5 (Fgf5) from Mus musculus (Mouse).